The following is a 95-amino-acid chain: Aspartyl/glutamyl-tRNA(Asn/Gln) amidotransferase subunit C (95 aa).

It belongs to the GatC family. In terms of assembly, heterotrimer of A, B and C subunits.

It carries out the reaction L-glutamyl-tRNA(Gln) + L-glutamine + ATP + H2O = L-glutaminyl-tRNA(Gln) + L-glutamate + ADP + phosphate + H(+). It catalyses the reaction L-aspartyl-tRNA(Asn) + L-glutamine + ATP + H2O = L-asparaginyl-tRNA(Asn) + L-glutamate + ADP + phosphate + 2 H(+). Allows the formation of correctly charged Asn-tRNA(Asn) or Gln-tRNA(Gln) through the transamidation of misacylated Asp-tRNA(Asn) or Glu-tRNA(Gln) in organisms which lack either or both of asparaginyl-tRNA or glutaminyl-tRNA synthetases. The reaction takes place in the presence of glutamine and ATP through an activated phospho-Asp-tRNA(Asn) or phospho-Glu-tRNA(Gln). This Rhizobium johnstonii (strain DSM 114642 / LMG 32736 / 3841) (Rhizobium leguminosarum bv. viciae) protein is Aspartyl/glutamyl-tRNA(Asn/Gln) amidotransferase subunit C.